We begin with the raw amino-acid sequence, 658 residues long: Exoribonuclease 2 (658 aa).

The 342-residue stretch at 189–530 folds into the RNB domain; it reads REDLTSLYFT…VNHRLIKQVL (342 aa). Residues 576–658 form the S1 motif domain; the sequence is AVEFDCEIAD…ETRSIVGNII (83 aa).

It belongs to the RNR ribonuclease family. RNase II subfamily.

The protein localises to the cytoplasm. The catalysed reaction is Exonucleolytic cleavage in the 3'- to 5'-direction to yield nucleoside 5'-phosphates.. In terms of biological role, involved in mRNA degradation. Hydrolyzes single-stranded polyribonucleotides processively in the 3' to 5' direction. The protein is Exoribonuclease 2 of Actinobacillus pleuropneumoniae serotype 7 (strain AP76).